Reading from the N-terminus, the 597-residue chain is Lipoprotein LpqB (597 aa).

The first 28 residues, 1–28 (MTPGSRSAMRSRSVCGAIALAVLVTVSG), serve as a signal peptide directing secretion. C29 carries the N-palmitoyl cysteine lipid modification. C29 carries the S-diacylglycerol cysteine lipid modification. Residues 39 to 51 (QAIGTINRDSPGS) show a composition bias toward polar residues. A disordered region spans residues 39–59 (QAIGTINRDSPGSSVAAPAPG).

It belongs to the LpqB lipoprotein family.

It is found in the cell membrane. The polypeptide is Lipoprotein LpqB (Rhodococcus opacus (strain B4)).